The primary structure comprises 695 residues: MAP kinase phosphatase with leucine-rich repeats protein 2 (695 aa).

LRR repeat units lie at residues 101-122 (SLKSLILDFNKITEIPDCITLL), 124-145 (NLNHLSLAANQLTHVPEFLSQL), 147-167 (SLETFEIGINQFTCFPLNVCK), 170-191 (SLTSLHLETNNIKSLPEEFLNL), 193-214 (NLKDLSLFDNQLKEIPDSLPNN), 215-235 (IEKLNLGCNDISSSKSDSLIR), 239-260 (SLTTLNLSENKIEELDESLSCL), 262-283 (NVKTLMLDCNMIKVIPGSVLGS), 286-307 (SLVTLNLPHNLISDLPPEVILL), and 309-330 (NLRIIDLRGNNFENCKKLIPTE). Positions 413 to 426 (SENNEINENNQLLT) are enriched in low complexity. 2 disordered regions span residues 413–438 (SENNEINENNQLLTTDDDYNTDKNDS) and 492–519 (QEQLPQSKPENEKLTNIPEQQQKQQQQQ). The Tyrosine-protein phosphatase domain occupies 556–695 (VPDLIIDKLY…LKKFEKDLFK (140 aa)). The active-site Phosphocysteine intermediate is the cysteine 639.

This sequence belongs to the protein-tyrosine phosphatase family. Non-receptor class dual specificity subfamily.

The enzyme catalyses O-phospho-L-tyrosyl-[protein] + H2O = L-tyrosyl-[protein] + phosphate. The catalysed reaction is O-phospho-L-seryl-[protein] + H2O = L-seryl-[protein] + phosphate. It catalyses the reaction O-phospho-L-threonyl-[protein] + H2O = L-threonyl-[protein] + phosphate. Functionally, probable phosphatase with dual specificity toward Ser/Thr and Tyr-containing proteins. The protein is MAP kinase phosphatase with leucine-rich repeats protein 2 (mpl2) of Dictyostelium discoideum (Social amoeba).